The primary structure comprises 798 residues: MLQNVTPHKLPGEGNAGLLGLGPEAAAPGKRIRKPSLLYEGFESPTMASVPALQLAPANPPPPEVSNPKKPGRVTNQLQYLHKVVMKALWKHQFAWPFRQPVDAVKLGLPDYHKIIKQPMDMGTIKRRLENNYYWAASECMQDFNTMFTNCYIYNKPTDDIVLMAQTLEKIFLQKVASMPQEEQELVVTIPKNSHKKGAKLAALQGSITSAHQVPAVSSVSHTALYTPPPEIPTTVLNIPHPSVISSPLLKSLHSAGPPLLAVSAAPPAQPLAKKKGVKRKADTTTPTPTAILAPGSPASPPGSLEPKAARLPPMRRESGRPIKPPRKDLPDSQQQHQSSKKGKLSEQLKHCNGILKELLSKKHAAYAWPFYKPVDASALGLHDYHDIIKHPMDLSTVKRKMENRDYRDAQEFAADVRLMFSNCYKYNPPDHDVVAMARKLQDVFEFRYAKMPDEPLEPGPLPVSTALPPGLTKSSSESSSEESSSESSSEEEEEEEEDEDEEESESSDSEEERAHRLAELQEQLRAVHEQLAALSQGPISKPKRKREKKEKKKKRKAEKHRGRIGIDEDDKGPRAPRPPQPKKSKKAGGGGSNATTLSHPGFGTSGGSSNKLPKKSQKTAPPVLPTGYDSEEEEESRPMSYDEKRQLSLDINKLPGEKLGRVVHIIQAREPSLRDSNPEEIEIDFETLKPSTLRELERYVLSCLRKKPRKPYTIRKPVGKTKEELALEKKRELEKRLQDVSGQLNSTKKPPKKASEKTESSAQQVAVSRLSASSSSSDSSSSSSSSSSSDTSDSDSG.

Met-1 bears the N-acetylmethionine mark. The disordered stretch occupies residues 1–21 (MLQNVTPHKLPGEGNAGLLGL). Thr-6 bears the Phosphothreonine mark. Ser-36 carries the phosphoserine modification. The disordered stretch occupies residues 53 to 72 (LQLAPANPPPPEVSNPKKPG). Residues 73–179 (RVTNQLQYLH…KIFLQKVASM (107 aa)) enclose the Bromo 1 domain. Asp-111, Tyr-154, Asn-155, Lys-156, Asp-159, and Asp-160 together coordinate a protein. Disordered regions lie at residues 267-348 (PPAQ…LSEQ), 454-645 (DEPL…YDEK), and 736-798 (KRLQ…SDSG). Low complexity predominate over residues 284 to 297 (TTTPTPTAILAPGS). A phosphoserine mark is found at Ser-297, Ser-300, and Ser-304. Residues 315–331 (MRRESGRPIKPPRKDLP) show a composition bias toward basic and acidic residues. Residues 343 to 452 (GKLSEQLKHC…DVFEFRYAKM (110 aa)) form the Bromo 2 domain. Positions 480 to 512 (SSEESSSESSSEEEEEEEEDEDEEESESSDSEE) are enriched in acidic residues. Residues 542–564 (KPKRKREKKEKKKKRKAEKHRGR) show a composition bias toward basic residues. The Nuclear localization signal motif lies at 553-557 (KKKRK). One can recognise an NET domain in the interval 630–712 (DSEEEEESRP…SCLRKKPRKP (83 aa)). Position 631 is a phosphoserine (Ser-631). The span at 772-792 (SASSSSSDSSSSSSSSSSSDT) shows a compositional bias: low complexity.

The protein belongs to the BET family. Homodimer. Interacts with E2F1. Interacts with (acetylated) STAT3; promoting STAT3 recruitment to chromatin. Interacts with CTCF; promoting BRD2 recruitment to chromatin. In terms of tissue distribution, predominantly expressed in the testis, followed by ovary, placenta, embryo and to a lower extent in somatic tissues.

It localises to the nucleus. Its subcellular location is the chromosome. Its function is as follows. Chromatin reader protein that specifically recognizes and binds histone H4 acetylated at 'Lys-5' and 'Lys-12' (H4K5ac and H4K12ac, respectively), thereby controlling gene expression and remodeling chromatin structures. Recruits transcription factors and coactivators to target gene sites, and activates RNA polymerase II machinery for transcriptional elongation. Plays a key role in genome compartmentalization via its association with CTCF and cohesin: recruited to chromatin by CTCF and promotes formation of topologically associating domains (TADs) via its ability to bind acetylated histones, contributing to CTCF boundary formation and enhancer insulation. Also recognizes and binds acetylated non-histone proteins, such as STAT3. Involved in inflammatory response by regulating differentiation of naive CD4(+) T-cells into T-helper Th17: recognizes and binds STAT3 acetylated at 'Lys-87', promoting STAT3 recruitment to chromatin. In addition to acetylated lysines, also recognizes and binds lysine residues on histones that are both methylated and acetylated on the same side chain to form N6-acetyl-N6-methyllysine (Kacme), an epigenetic mark of active chromatin associated with increased transcriptional initiation. Specifically binds histone H4 acetyl-methylated at 'Lys-5' and 'Lys-12' (H4K5acme and H4K12acme, respectively). In Mus musculus (Mouse), this protein is Bromodomain-containing protein 2.